Consider the following 285-residue polypeptide: Small ribosomal subunit protein uS2 (285 aa).

The interval 228–285 (RAGLSADKDAKPEAGAGEPLAEWEQELLSQAAPAAEAEAAPAAEAEAAPAAEAPATEA) is disordered. Positions 258-285 (AAPAAEAEAAPAAEAEAAPAAEAPATEA) are enriched in low complexity.

This sequence belongs to the universal ribosomal protein uS2 family.

The chain is Small ribosomal subunit protein uS2 from Rhodococcus erythropolis (strain PR4 / NBRC 100887).